The following is a 365-amino-acid chain: Probable secreted beta-glucosidase UTH1 (365 aa).

Positions 1–17 (MKLSALLALSASTAVLA) are cleaved as a signal peptide.

It belongs to the SUN family.

The protein localises to the mitochondrion outer membrane. Its subcellular location is the secreted. It localises to the cell wall. Its function is as follows. Involved in aging, oxidative stress response, and in the regulation of mitochondrial biogenesis. Inactivation of UTH1 increases life span, leads to higher resistance to heat stress and against hydrogen peroxide, and increases sensitivity to the superoxide radical-generating drug paraquat and to copper. Also required for the selective autophagic degradation of mitochondria (mitophagy) in response to nitrogen starvation. Involved in the remodeling of the cell wall during the various phases of yeast culture development and under various environmental conditions and plays a role in septation. Involved in cell sensitivity to boric acid. The chain is Probable secreted beta-glucosidase UTH1 (UTH1) from Saccharomyces cerevisiae (strain ATCC 204508 / S288c) (Baker's yeast).